Consider the following 252-residue polypeptide: 3-dehydroquinate dehydratase (252 aa).

3-dehydroquinate contacts are provided by residues S21, 46 to 48 (EWR), and R82. H143 serves as the catalytic Proton donor/acceptor. K170 functions as the Schiff-base intermediate with substrate in the catalytic mechanism. The 3-dehydroquinate site is built by R213, S232, and Q236.

Belongs to the type-I 3-dehydroquinase family. As to quaternary structure, homodimer.

It carries out the reaction 3-dehydroquinate = 3-dehydroshikimate + H2O. The protein operates within metabolic intermediate biosynthesis; chorismate biosynthesis; chorismate from D-erythrose 4-phosphate and phosphoenolpyruvate: step 3/7. In terms of biological role, involved in the third step of the chorismate pathway, which leads to the biosynthesis of aromatic amino acids. Catalyzes the cis-dehydration of 3-dehydroquinate (DHQ) and introduces the first double bond of the aromatic ring to yield 3-dehydroshikimate. The sequence is that of 3-dehydroquinate dehydratase from Shigella dysenteriae.